Here is a 429-residue protein sequence, read N- to C-terminus: Probable alcohol acetyltransferase orf1 (429 aa).

This sequence belongs to the alcohol acetyltransferase FCK4 family.

The protein operates within secondary metabolite biosynthesis. Probable alcohol acetyltransferase; part of the gene cluster that mediates the biosynthesis of the glycolipid biosurfactant ustilagic acid (UA). UA is a secreted cellobiose glycolipid that is toxic for many microorganisms and confers biocontrol activity to U.maydis. UA consists of 15,16-dihydroxypalmitic or 2,15,16-trihydroxypalmitic acid, which is O-glycosidically linked to cellobiose at its terminal hydroxyl group. In addition, the cellobiose moiety is acetylated and acylated with a short-chain hydroxy fatty acid. UA biosynthesis starts with omega-hydroxylation of palmitic acid catalyzed by the cytochrome P450 monooxygenase cyp1. Terminal hydroxylation of palmitic acid precedes subterminal hydroxylation catalyzed by the cytochrome P450 monooxygenase cyp2. Sequential glucosylation of the hydroxy fatty acid is probably catalyzed by the glycosyltransferase ugt1. The cellobiose lipid is further decorated by acetylation of the proximal glucose residue and by acylation with a short-chain beta-hydroxy fatty acid at the distal glucose residue. The acyltransferase uat1 may be a good candidate for catalyzing either acetylation or acylation of the cellobiose lipid. The fatty acid synthase fas2 may be involved in synthesis of the carbon backbone of the short-chain beta-hydroxy fatty acid esterified to the cellobiose disaccharide. The secreted UA consists of a mixture of both alpha-hydroxylated and non-hydroxylated glycolipids; therefore, alpha-hydroxylation of the long-chain fatty, catalyzed by the fatty acid hydroxylase ahd1, occurs late in UA biosynthesis and may be the last step before secretion. The protein is Probable alcohol acetyltransferase orf1 of Mycosarcoma maydis (Corn smut fungus).